Here is a 429-residue protein sequence, read N- to C-terminus: Serine hydroxymethyltransferase (429 aa).

120 to 122 is a binding site for (6S)-5,6,7,8-tetrahydrofolate; that stretch reads GHI. At Lys226 the chain carries N6-(pyridoxal phosphate)lysine.

This sequence belongs to the SHMT family. As to quaternary structure, homodimer. The cofactor is pyridoxal 5'-phosphate.

It localises to the cytoplasm. It catalyses the reaction 5,10-methylenetetrahydromethanopterin + glycine + H2O = 5,6,7,8-tetrahydromethanopterin + L-serine. The catalysed reaction is L-allo-threonine = acetaldehyde + glycine. It functions in the pathway amino-acid biosynthesis; glycine biosynthesis; glycine from L-serine: step 1/1. In terms of biological role, catalyzes the reversible interconversion of serine and glycine with tetrahydromethanopterin (H4MPT) serving as the one-carbon carrier. The use of tetrahydrofolate (THF or H4PteGlu) as the pteridine substrate is 450-fold less efficient than that of H4MPT. Also exhibits a pteridine-independent aldolase activity toward beta-hydroxyamino acids, producing glycine and aldehydes, via a retro-aldol mechanism. Thus, is able to catalyze the cleavage of L-allo-threonine and L-threo-beta-phenylserine. The protein is Serine hydroxymethyltransferase of Methanocaldococcus jannaschii (strain ATCC 43067 / DSM 2661 / JAL-1 / JCM 10045 / NBRC 100440) (Methanococcus jannaschii).